The following is a 317-amino-acid chain: 3'-5' exoribonuclease YhaM (317 aa).

Positions 17 to 90 (FLLIKESTRG…QLKILSIRLS (74 aa)) form a DNA-binding region, OB. The 117-residue stretch at 163–279 (HVVSMLAIGK…LHLIDLIDAK (117 aa)) folds into the HD domain.

It belongs to the YhaM family.

Functionally, shows a 3'-5' exoribonuclease activity. In Oceanobacillus iheyensis (strain DSM 14371 / CIP 107618 / JCM 11309 / KCTC 3954 / HTE831), this protein is 3'-5' exoribonuclease YhaM.